Here is a 492-residue protein sequence, read N- to C-terminus: MIRLRTYAGLSFMATLAVIYHAFSSRGQFYPATVYLSTSKISLVLLLNMCLVLMLSLWHLVKFVFLGSLREAEVERLNEQAWRELMEILFAITIFRQDFSSGFLPLVVTLLLIKALHWLAQKRVEYIETTPSVSKLSHFRIVSFMGFLLLVDSLFMYSSIRHLIQSRQASVSLFFSFEYMILATTTVAIFVKYVFYVTDMLMDGQWEKKPVYTFYLELIRDLLHLSMYICFFFVIFMNYGVPLHLLRELYETFRNFQIRVSDYLRYRKITSNMNDRFPDATPEELTASDATCIICREEMTNAKKLICGHLFHVHCLRSWLERQQTCPTCRALVVPPENATSAAPGQRELHQGSQQGTSSSGNQGSEISSSAGVSNNSLSRHHARLQAAASAASVYGKSMVYPSANTVAWSSGVPGTEQVSTEPDQTLPQHNLPVENSHAYANMSETKLEEMRKSLETHLEILRNRLHFLETRKPESAGEPENKGKSVADAAE.

Topologically, residues 1–3 (MIR) are cytoplasmic. A helical transmembrane segment spans residues 4–24 (LRTYAGLSFMATLAVIYHAFS). At 25–40 (SRGQFYPATVYLSTSK) the chain is on the lumenal side. The helical transmembrane segment at 41 to 61 (ISLVLLLNMCLVLMLSLWHLV) threads the bilayer. At 62–98 (KFVFLGSLREAEVERLNEQAWRELMEILFAITIFRQD) the chain is on the cytoplasmic side. The chain crosses the membrane as a helical span at residues 99 to 119 (FSSGFLPLVVTLLLIKALHWL). Residues 120–135 (AQKRVEYIETTPSVSK) are Lumenal-facing. Residues 136–156 (LSHFRIVSFMGFLLLVDSLFM) form a helical membrane-spanning segment. The Cytoplasmic segment spans residues 157–170 (YSSIRHLIQSRQAS). Residues 171–191 (VSLFFSFEYMILATTTVAIFV) traverse the membrane as a helical segment. The Lumenal portion of the chain corresponds to 192–221 (KYVFYVTDMLMDGQWEKKPVYTFYLELIRD). Residues 222-242 (LLHLSMYICFFFVIFMNYGVP) traverse the membrane as a helical segment. The Cytoplasmic segment spans residues 243 to 492 (LHLLRELYET…KGKSVADAAE (250 aa)). The RING-type; atypical zinc finger occupies 292–330 (CIICREEMTNAKKLICGHLFHVHCLRSWLERQQTCPTCR). Disordered regions lie at residues 339 to 379 (ATSA…NSLS) and 470 to 492 (ETRKPESAGEPENKGKSVADAAE). Positions 351 to 378 (QGSQQGTSSSGNQGSEISSSAGVSNNSL) are enriched in low complexity. Positions 470–486 (ETRKPESAGEPENKGKS) are enriched in basic and acidic residues.

This sequence belongs to the HRD1 family.

The protein resides in the endoplasmic reticulum membrane. The catalysed reaction is S-ubiquitinyl-[E2 ubiquitin-conjugating enzyme]-L-cysteine + [acceptor protein]-L-lysine = [E2 ubiquitin-conjugating enzyme]-L-cysteine + N(6)-ubiquitinyl-[acceptor protein]-L-lysine.. It participates in protein modification; protein ubiquitination. Functionally, probable component of the HRD1 ubiquitin ligase complex that mediates the rapid degradation of misfolded endoplasmic reticulum (ER) proteins, a process called ER-associated degradation (ERAD). Targets the misfolded LRR receptor kinase BRI1. Functions redundantly with HRD3B. This Arabidopsis thaliana (Mouse-ear cress) protein is ERAD-associated E3 ubiquitin-protein ligase HRD1A.